The following is a 548-amino-acid chain: Biotin-dependent acetyl-/propionyl-coenzyme A carboxylase beta5 subunit (548 aa).

The interval 1–23 is disordered; it reads MTSVTDRSAHSAERSTEHTIDIH. A compositionally biased stretch (basic and acidic residues) spans 7–21; sequence RSAHSAERSTEHTID. Positions 25 to 281 constitute a CoA carboxyltransferase N-terminal domain; sequence TAGKLAELHK…NNSTDAPRYQ (257 aa). The region spanning 295–541 is the CoA carboxyltransferase C-terminal domain; it reads DEDLELDTLI…ERKIAQLPPK (247 aa).

This sequence belongs to the AccD/PCCB family. In terms of assembly, the biotin-dependent acyl-CoA carboxylase complex is composed of AccA3, which contains the biotin carboxylase (BC) and biotin carboxyl carrier protein (BCCP) domains, and AccD5, which contains the carboxyl transferase (CT) domain.

The enzyme catalyses N(6)-carboxybiotinyl-L-lysyl-[protein] + acetyl-CoA = N(6)-biotinyl-L-lysyl-[protein] + malonyl-CoA. It carries out the reaction N(6)-carboxybiotinyl-L-lysyl-[protein] + propanoyl-CoA = methylmalonyl-CoA + N(6)-biotinyl-L-lysyl-[protein]. Its pathway is lipid metabolism; mycolic acid biosynthesis. In terms of biological role, component of a biotin-dependent acyl-CoA carboxylase complex. This subunit transfers the CO2 from carboxybiotin to the CoA ester substrate. When associated with the alpha3 subunit AccA3, is involved in the carboxylation of acetyl-CoA and propionyl-CoA. The protein is Biotin-dependent acetyl-/propionyl-coenzyme A carboxylase beta5 subunit (accD5) of Mycobacterium tuberculosis (strain CDC 1551 / Oshkosh).